The sequence spans 597 residues: Dictomallein-3 (597 aa).

Positions M1–C19 are cleaved as a signal peptide. The Peptidase M66 domain maps to P148 to Y409. Residue H301 participates in Zn(2+) binding. Residue E302 is part of the active site. Residues H305 and H311 each coordinate Zn(2+).

It belongs to the dictomallein family. Zn(2+) serves as cofactor.

It localises to the secreted. The protein is Dictomallein-3 (dtmlC) of Dictyostelium discoideum (Social amoeba).